Here is a 106-residue protein sequence, read N- to C-terminus: Cytochrome c2 (106 aa).

Heme c-binding residues include C19, C22, H23, and M84.

The protein belongs to the cytochrome c family. In terms of processing, binds 1 heme c group covalently per subunit.

In Rhodopila globiformis (Rhodopseudomonas globiformis), this protein is Cytochrome c2.